The following is a 143-amino-acid chain: Transcriptional regulator MraZ (143 aa).

SpoVT-AbrB domains are found at residues 5-47 (THSP…PIRE) and 76-119 (ASNE…DAQT).

Belongs to the MraZ family. As to quaternary structure, forms oligomers.

The protein resides in the cytoplasm. The protein localises to the nucleoid. The protein is Transcriptional regulator MraZ of Thermobifida fusca (strain YX).